The sequence spans 336 residues: Vacuolar protein sorting-associated protein 26B (336 aa).

Phosphoserine occurs at positions 302, 304, and 319.

This sequence belongs to the VPS26 family. Component of the heterotrimeric retromer cargo-selective complex (CSC), also described as vacuolar protein sorting subcomplex (VPS), formed by VPS26 (VPS26A or VPS26B), VPS29 and VPS35. The CSC has a highly elongated structure with VPS26 and VPS29 binding independently at opposite distal ends of VPS35 as central platform. The CSC is believed to associate with variable sorting nexins to form functionally distinct retromer complex variants. The originally described SNX-BAR retromer is a pentamer containing the CSC and a heterodimeric membrane-deforming subcomplex formed between SNX1 or SNX2 and SNX5 or SNX6 (also called SNX-BAR subcomplex); the respective CSC and SNX-BAR subcomplexes associate with low affinity. The CSC associates with SNX3 to form a SNX3-retromer complex. The CSC associates with SNX27, the WASH complex and the SNX-BAR subcomplex to form the SNX27-retromer complex. Interacts with VPS29, VPS35, TBC1D5, GOLPH3, SNX27. In terms of tissue distribution, ubiquitously expressed in developing embryo and adult. Highly expressed in brain.

The protein localises to the cytoplasm. It is found in the membrane. Its subcellular location is the early endosome. The protein resides in the late endosome. Acts as a component of the retromer cargo-selective complex (CSC). The CSC is believed to be the core functional component of retromer or respective retromer complex variants acting to prevent missorting of selected transmembrane cargo proteins into the lysosomal degradation pathway. The recruitment of the CSC to the endosomal membrane involves RAB7A and SNX3. The SNX-BAR retromer mediates retrograde transport of cargo proteins from endosomes to the trans-Golgi network (TGN) and is involved in endosome-to-plasma membrane transport for cargo protein recycling. The SNX3-retromer mediates the retrograde transport of WLS distinct from the SNX-BAR retromer pathway. The SNX27-retromer is believed to be involved in endosome-to-plasma membrane trafficking and recycling of a broad spectrum of cargo proteins. The CSC seems to act as recruitment hub for other proteins, such as the WASH complex and TBC1D5. May be involved in retrograde transport of SORT1 but not of IGF2R. Acts redundantly with VSP26A in SNX-27 mediated endocytic recycling of SLC2A1/GLUT1. The polypeptide is Vacuolar protein sorting-associated protein 26B (Vps26b) (Mus musculus (Mouse)).